We begin with the raw amino-acid sequence, 281 residues long: NADH-quinone oxidoreductase subunit B (281 aa).

Positions 37, 38, 103, and 132 each coordinate [4Fe-4S] cluster. The disordered stretch occupies residues 242–281; the sequence is DAKPLDESRAHGPGPTTADIADAADTADSDAAPGATHDTP. Residues 257-281 show a composition bias toward low complexity; that stretch reads TTADIADAADTADSDAAPGATHDTP.

Belongs to the complex I 20 kDa subunit family. NDH-1 is composed of 14 different subunits. Subunits NuoB, C, D, E, F, and G constitute the peripheral sector of the complex. It depends on [4Fe-4S] cluster as a cofactor.

Its subcellular location is the cell membrane. The catalysed reaction is a quinone + NADH + 5 H(+)(in) = a quinol + NAD(+) + 4 H(+)(out). NDH-1 shuttles electrons from NADH, via FMN and iron-sulfur (Fe-S) centers, to quinones in the respiratory chain. The immediate electron acceptor for the enzyme in this species is believed to be a menaquinone. Couples the redox reaction to proton translocation (for every two electrons transferred, four hydrogen ions are translocated across the cytoplasmic membrane), and thus conserves the redox energy in a proton gradient. In Frankia alni (strain DSM 45986 / CECT 9034 / ACN14a), this protein is NADH-quinone oxidoreductase subunit B.